Consider the following 993-residue polypeptide: MEEKRSTNSPGFDKPKLNRSGSITSATSHPPRSNSNPKLVAKHQQQLYEESKNKRNQEQQNQQPQQQQQKQTSNQSEDPATQLSSLKFESDKEKEQALLWAFLASYLPEDKGSLQKEFVKHVEYTLAQTKSECTDFSSFQALSYCTRDRLIERWKDTKLFFKQKNVKQVNYMSLEFLLGRSLQNSLSALGLVGKYSDALMDLGFKLEDLYDEERDAGLGNGGLGRLAACFMDSLATCNFPGYGYGLRYKFGMFYQTLVDGEQVELPDYWLNYGSPWEIERLDVSYPINFYGKVSEVEDENGKKVMKWDQGEQMLAVAYDYPIPGFKTYNTVAIRLWSSKPSDEFNLDSFNRGDYLGAIEEKEKSENITNVLYPNDNTMQGKELRLKQQYLFVSATIQDIISQFKETGKPFSEFHNFHAIQLNDTHPTLGIPELMRILIDEEKKSWDEAWDITTKTFSYTNHTVLPEALEKWSVSMVENVLPRHIMIIYEINERFLKLVDQKWPGDMSKRRALSIIDESDGKFIRMAFLAIVGSHTINGVAYLHSELVKHDVFPLFYEIWPNKFQNKTNGVTPRRWIQQSNPQLAELITRSLNSDRWLVNLDIIKDLVHLADNSSFQKEWMEIKRNNKIRLAKYIEKRCDIQVNVDVLFDVQVKRFHEYKRQLLNVLSVINRYLDIKEGKKVAPRVVIFGGKAAPGYYMAKLIIKLINSVADVVNNDPKVGDLLKVVFIPNYCVSNAEIIIPASDISQHISTAGTEASGTSNMKFSMNGGLIIGTLDGANIEIRDAIGHENMYIFGARSEEVNKVKKIIHDGKFTPDTRWARVLTAIKEDTFGPHEQFQDIINSVSGGNDHYILSYDFGSYLDIQNSIDQDFKDRAKWAKKSIMASVCCGKFSSDRTIKEYAQQIWGIEEWKRPGPVPVSNEEARSLLVPPPSGSPNDINAISIERLSPLTFVKQTSASPLSVISGGDKTNNTLKPKQTTKGFNIGGQPGNPTN.

The segment at 1–82 is disordered; sequence MEEKRSTNSP…SNQSEDPATQ (82 aa). Positions 19 to 48 are enriched in polar residues; the sequence is RSGSITSATSHPPRSNSNPKLVAKHQQQLY. A compositionally biased stretch (low complexity) spans 58–77; that stretch reads EQQNQQPQQQQQKQTSNQSE. N6-(pyridoxal phosphate)lysine is present on K763. The segment covering 962–981 has biased composition (polar residues); it reads VISGGDKTNNTLKPKQTTKG. The segment at 962–993 is disordered; that stretch reads VISGGDKTNNTLKPKQTTKGFNIGGQPGNPTN. Residues 983-993 are compositionally biased toward gly residues; the sequence is NIGGQPGNPTN.

It belongs to the glycogen phosphorylase family. Homodimer. Pyridoxal 5'-phosphate serves as cofactor. The N-terminus is blocked. In terms of processing, enzyme activity requires processing of the 113 kDa peptide to an enzymatically active 106 kDa form of the protein. Processing would occur near the middle of the Gln-rich repetitive element.

It carries out the reaction [(1-&gt;4)-alpha-D-glucosyl](n) + phosphate = [(1-&gt;4)-alpha-D-glucosyl](n-1) + alpha-D-glucose 1-phosphate. In terms of biological role, phosphorylase is an important allosteric enzyme in carbohydrate metabolism. Enzymes from different sources differ in their regulatory mechanisms and in their natural substrates. However, all known phosphorylases share catalytic and structural properties. This is Glycogen phosphorylase 2 (glpD) from Dictyostelium discoideum (Social amoeba).